The primary structure comprises 623 residues: DNA mismatch repair protein MutL (623 aa).

The span at 353 to 368 (AQQSAPRPANSYSPAS) shows a compositional bias: polar residues. The disordered stretch occupies residues 353 to 389 (AQQSAPRPANSYSPASWRTAPPAPRSEWSPQTAHPAH).

This sequence belongs to the DNA mismatch repair MutL/HexB family.

This protein is involved in the repair of mismatches in DNA. It is required for dam-dependent methyl-directed DNA mismatch repair. May act as a 'molecular matchmaker', a protein that promotes the formation of a stable complex between two or more DNA-binding proteins in an ATP-dependent manner without itself being part of a final effector complex. In Brucella melitensis biotype 1 (strain ATCC 23456 / CCUG 17765 / NCTC 10094 / 16M), this protein is DNA mismatch repair protein MutL.